We begin with the raw amino-acid sequence, 332 residues long: Holliday junction branch migration complex subunit RuvB (332 aa).

Residues Met-1–Tyr-182 are large ATPase domain (RuvB-L). Residues Leu-21, Arg-22, Gly-63, Lys-66, Thr-67, Thr-68, Glu-129–Phe-131, Arg-172, Tyr-182, and Arg-219 each bind ATP. Thr-67 is a binding site for Mg(2+). Residues Asp-183–Ser-253 form a small ATPAse domain (RuvB-S) region. Residues Glu-256 to Arg-332 are head domain (RuvB-H). Arg-311 and Arg-316 together coordinate DNA.

The protein belongs to the RuvB family. In terms of assembly, homohexamer. Forms an RuvA(8)-RuvB(12)-Holliday junction (HJ) complex. HJ DNA is sandwiched between 2 RuvA tetramers; dsDNA enters through RuvA and exits via RuvB. An RuvB hexamer assembles on each DNA strand where it exits the tetramer. Each RuvB hexamer is contacted by two RuvA subunits (via domain III) on 2 adjacent RuvB subunits; this complex drives branch migration. In the full resolvosome a probable DNA-RuvA(4)-RuvB(12)-RuvC(2) complex forms which resolves the HJ.

It is found in the cytoplasm. It catalyses the reaction ATP + H2O = ADP + phosphate + H(+). The RuvA-RuvB-RuvC complex processes Holliday junction (HJ) DNA during genetic recombination and DNA repair, while the RuvA-RuvB complex plays an important role in the rescue of blocked DNA replication forks via replication fork reversal (RFR). RuvA specifically binds to HJ cruciform DNA, conferring on it an open structure. The RuvB hexamer acts as an ATP-dependent pump, pulling dsDNA into and through the RuvAB complex. RuvB forms 2 homohexamers on either side of HJ DNA bound by 1 or 2 RuvA tetramers; 4 subunits per hexamer contact DNA at a time. Coordinated motions by a converter formed by DNA-disengaged RuvB subunits stimulates ATP hydrolysis and nucleotide exchange. Immobilization of the converter enables RuvB to convert the ATP-contained energy into a lever motion, pulling 2 nucleotides of DNA out of the RuvA tetramer per ATP hydrolyzed, thus driving DNA branch migration. The RuvB motors rotate together with the DNA substrate, which together with the progressing nucleotide cycle form the mechanistic basis for DNA recombination by continuous HJ branch migration. Branch migration allows RuvC to scan DNA until it finds its consensus sequence, where it cleaves and resolves cruciform DNA. The chain is Holliday junction branch migration complex subunit RuvB from Protochlamydia amoebophila (strain UWE25).